The chain runs to 185 residues: Neuronal vesicle trafficking-associated protein 1 (185 aa).

Topologically, residues 1 to 82 (MVKLGNNFSE…ITEGVSERFK (82 aa)) are cytoplasmic. The chain crosses the membrane as a helical; Signal-anchor for type II membrane protein span at residues 83–103 (VTVLVLFALAFLTCVVFLVVY). At 104–185 (KVYKYDHTCP…QETEAAEKSA (82 aa)) the chain is on the lumenal side.

It belongs to the NSG family.

Its subcellular location is the membrane. It localises to the golgi apparatus. The protein resides in the trans-Golgi network membrane. It is found in the endosome membrane. The protein localises to the cell projection. Its subcellular location is the dendrite. It localises to the early endosome membrane. The protein resides in the late endosome membrane. It is found in the lysosome lumen. The protein localises to the recycling endosome membrane. Its subcellular location is the cytoplasmic vesicle membrane. It localises to the golgi stack membrane. The protein resides in the endosome. It is found in the multivesicular body membrane. Plays a role in the recycling mechanism in neurons of multiple receptors and acts at the level of early endosomes to promote sorting of receptors toward a recycling pathway. This chain is Neuronal vesicle trafficking-associated protein 1, found in Gallus gallus (Chicken).